The following is a 279-amino-acid chain: MAVKRIKNHSSGKRQTVVVDYKSILTTSKPEKSLLVTLPKKAGRNNQGKITIRHHGGGHKRKYRIIDFKRNKDNIYGTIKSIEYDPNRTSFISLVVYADGEKRYIIAPKGIKVGDKIISGNENIDILLGNSLPLEFIPEDTLVHNIELSPNAGGQITRSAGASAQILGFDETKKYILVKLNSGEVRKFRKECRATIGTVSNDEHILENLGKAGKSRHLGVRPTVRGSAMNPNDHPHGGGEGRSPVGMDAPRTPWGKRHMGVKTRNNKKSSTSMIVRRRK.

Residues 223 to 279 form a disordered region; the sequence is TVRGSAMNPNDHPHGGGEGRSPVGMDAPRTPWGKRHMGVKTRNNKKSSTSMIVRRRK. Over residues 254–267 the composition is skewed to basic residues; the sequence is WGKRHMGVKTRNNK.

Belongs to the universal ribosomal protein uL2 family. In terms of assembly, part of the 50S ribosomal subunit. Forms a bridge to the 30S subunit in the 70S ribosome.

Its function is as follows. One of the primary rRNA binding proteins. Required for association of the 30S and 50S subunits to form the 70S ribosome, for tRNA binding and peptide bond formation. It has been suggested to have peptidyltransferase activity; this is somewhat controversial. Makes several contacts with the 16S rRNA in the 70S ribosome. The protein is Large ribosomal subunit protein uL2 of Ureaplasma urealyticum serovar 10 (strain ATCC 33699 / Western).